A 746-amino-acid polypeptide reads, in one-letter code: MEHTYQYSWIIPFIPLPVPILLGVGLLLFPTATKNLRRMWTFLSIFLLSIVMIFSIYLSIQQIFLSCIHQNVWSWTINNEFSFEFGYFIDPLTSIMSILITTVGILVLIYSDNYMSHDQGYLRFFAYMGFFNTSMLGLVTSSNLIQVYFFWELVGMCSYLLIGFWFTRPIAANACQKAFVTNRVGDFGLLLGILGLYWITGSFEFQDLFEIFNNLILNNRVNLLFLTLCAFLLFVGPIAKSAQFPLHVWLPDAMEGPTPISALIHAATMVAAGIFLVARLLPLFIVIPSIMYIISLIGIITVLLGATLALAQKDIKRGLAYSTMSQLGYMMLALGMGSYRSALFHLITHAYSKALLFLGSGSIIHSMEAIVGYSPDKSQNMILMGGLTKHVPITKTAFLIGTLSLCGIPPLACFWSKDEILNDSLLFSPIFAIIACSTAGLTAFYMFRIYLLTFEGHLNTYFLNYSGKKSGSFYSLSLWGKEEEKKLNKNFGLVPLLTMNNTKRASFFCNKTYKISNNVRNQIFITVENFGLNTRTFYYPHESDNTILFPMLILVLFTLFIGAIGIPFNQEGIDFDILSKFFTPSINLLHKNSQNFVDWYEFLRNATFSVSIAFFGIFIAYCLYKPFYSSLLNLTLLNSFQKWNSKRIHWEKLINFVYNWSYNRGYIDSFFKTSLIESIRRLAKQTTFFDKRIIDGITNGVGITSFFVGEVTKYIGGSRISSYLFLYLSYVLIFLMILFFFYFEKF.

16 helical membrane passes run 9–29 (WIIP…LLLF), 40–60 (WTFL…YLSI), 89–109 (IDPL…LVLI), 125–145 (FAYM…SNLI), 147–167 (VYFF…FWFT), 185–205 (GDFG…SFEF), 221–241 (VNLL…IAKS), 258–278 (TPIS…FLVA), 280–300 (LLPL…IGII), 327–347 (LGYM…FHLI), 354–374 (ALLF…VGYS), 396–416 (TAFL…CFWS), 425–445 (LLFS…TAFY), 547–567 (ILFP…IGIP), 608–628 (FSVS…KPFY), and 723–743 (YLFL…FFYF).

This sequence belongs to the complex I subunit 5 family. As to quaternary structure, NDH is composed of at least 16 different subunits, 5 of which are encoded in the nucleus.

The protein localises to the plastid. It is found in the chloroplast thylakoid membrane. The catalysed reaction is a plastoquinone + NADH + (n+1) H(+)(in) = a plastoquinol + NAD(+) + n H(+)(out). The enzyme catalyses a plastoquinone + NADPH + (n+1) H(+)(in) = a plastoquinol + NADP(+) + n H(+)(out). Functionally, NDH shuttles electrons from NAD(P)H:plastoquinone, via FMN and iron-sulfur (Fe-S) centers, to quinones in the photosynthetic chain and possibly in a chloroplast respiratory chain. The immediate electron acceptor for the enzyme in this species is believed to be plastoquinone. Couples the redox reaction to proton translocation, and thus conserves the redox energy in a proton gradient. The chain is NAD(P)H-quinone oxidoreductase subunit 5, chloroplastic (ndhF) from Arabidopsis thaliana (Mouse-ear cress).